The following is a 467-amino-acid chain: MAPRSRRRKHKKPPPVTPMPDIPPTDVSAVRPALPEPGPSIDALGFIALDSDVPGLPQRILQRLNMKSYEEYKLVIDGGTPVPSFGFRCQQEMFQRMEDTFRFCAYCKALPHGLSSCKVLRHCKRCRNVYYCDAECQRSDWPAHRKVCGELRLVAVDRVMEWLLVTGDFVLPSGPWPWLPEEIQNWDTWFSMRGLQLESTLNALLGSHAMTMLWASLGRPRPDPDVLHGSLKRLMTDVLSRPLTLGLGIRTLAIDVGKTGGSTLHVVGASHVETFLIRSGDYDELGYMFPENLGFRVIMVGVDVSADLLQSSSSLPLEPGTVQLSGHRALYHDFWEEQIETGNLAHPDLVAAFHPGFHASPGLMEAWLPTLLLLRDYEIPTLITVYSQQELEASLQVLVNLDTHIIACGANPFASLKPEQVYSKPNKQPVYSSAYYIVFRGCSSCQLDKQQVEEEPDEFSVVESNPN.

Basic residues predominate over residues 1–13 (MAPRSRRRKHKKP). The disordered stretch occupies residues 1 to 34 (MAPRSRRRKHKKPPPVTPMPDIPPTDVSAVRPAL). Over residues 14–23 (PPVTPMPDIP) the composition is skewed to pro residues. Zn(2+) contacts are provided by cysteine 104, cysteine 107, cysteine 123, cysteine 126, cysteine 132, cysteine 136, histidine 144, and cysteine 148. The segment at 104-148 (CAYCKALPHGLSSCKVLRHCKRCRNVYYCDAECQRSDWPAHRKVC) adopts an MYND-type zinc-finger fold.

This chain is Putative protein MSS51 homolog, mitochondrial (Mss51), found in Rattus norvegicus (Rat).